A 947-amino-acid polypeptide reads, in one-letter code: Microtubule cross-linking factor 3 (947 aa).

Residues 1-21 form the signal peptide; the sequence is MSQPPIGGAAPATAAASPAAA. Disordered regions lie at residues 1–251, 266–368, and 496–524; these read MSQP…SYWK, KERA…TLKN, and LSLK…DNED. Composition is skewed to low complexity over residues 9-24, 72-81, and 109-137; these read AAPA…AATE, QQQLQQQQQQ, and APKG…ALGG. Residues 141 to 151 show a composition bias toward basic and acidic residues; sequence GPPEEPPRELE. Residues 164–180 show a composition bias toward gly residues; sequence GEGGGGGGEGGGAGGGS. A compositionally biased stretch (low complexity) spans 214-236; that stretch reads ASPSPSSSSAGKTPGTGSRNSGS. A compositionally biased stretch (gly residues) spans 237 to 248; that stretch reads GVAGGGSGGGGS. Low complexity-rich tracts occupy residues 287–297 and 304–325; these read SSRSSPVSGPP and AVAS…AEGS. The stretch at 342–726 forms a coiled coil; the sequence is HPQQLQEQEE…GKVMQLQYEN (385 aa). Composition is skewed to basic and acidic residues over residues 355–368 and 496–513; these read EMEK…TLKN and LSLK…EKKA. The residue at position 569 (Ser569) is a Phosphoserine. A disordered region spans residues 743-786; that stretch reads GIRGSPRDSDAESDAGKKESDDDSRPPHRKREGPIGGESDSEEV. Residues 747–768 are compositionally biased toward basic and acidic residues; the sequence is SPRDSDAESDAGKKESDDDSRP. Ser781 is modified (phosphoserine). Positions 811 to 835 form a coiled coil; it reads DRQQMKDIRSEAERLGKTIDRLIAD. The helical transmembrane segment at 915–935 threads the bilayer; sequence PIILLILILVLFSSLSYTTIF.

Belongs to the MTCL family.

The protein resides in the membrane. In Homo sapiens (Human), this protein is Microtubule cross-linking factor 3.